The sequence spans 191 residues: uncharacterized protein (191 aa).

The tract at residues 52–112 (NKQENQTESS…TNKDTNIETN (61 aa)) is disordered. Over residues 57–70 (QTESSDLNNTDSLV) the composition is skewed to polar residues. Residues 71 to 94 (DSNSDNQTNTTDTSTNNVENLNEN) are compositionally biased toward low complexity. A coiled-coil region spans residues 138 to 172 (QDKISDTERIRFLEEKVSKLERKIRTLSLQMTKIS).

This is an uncharacterized protein from Acanthamoeba polyphaga mimivirus (APMV).